A 241-amino-acid chain; its full sequence is Carboxy-S-adenosyl-L-methionine synthase (241 aa).

S-adenosyl-L-methionine is bound by residues Tyr38, 63–65, 88–89, 116–117, Asn131, and Arg198; these read GCS, DN, and DI.

The protein belongs to the class I-like SAM-binding methyltransferase superfamily. Cx-SAM synthase family. As to quaternary structure, homodimer.

The catalysed reaction is prephenate + S-adenosyl-L-methionine = carboxy-S-adenosyl-L-methionine + 3-phenylpyruvate + H2O. Functionally, catalyzes the conversion of S-adenosyl-L-methionine (SAM) to carboxy-S-adenosyl-L-methionine (Cx-SAM). In Haemophilus influenzae (strain ATCC 51907 / DSM 11121 / KW20 / Rd), this protein is Carboxy-S-adenosyl-L-methionine synthase.